A 320-amino-acid polypeptide reads, in one-letter code: Sliding-clamp-loader large subunit (320 aa).

Residues 12–15 (EQKY), Ile-24, 53–58 (GTGKTT), and Arg-205 contribute to the ATP site.

Belongs to the Tevenvirinae sliding-clamp-loader large subunit family. In terms of assembly, the sliding-clamp-loader consists of 4 large subunits and 1 small subunit. Interacts with the sliding clamp; this interaction allows the sliding-clamp-loader to open the sliding clamp. Part of the replicase complex that includes the DNA polymerase, the polymerase clamp, the clamp loader complex, the single-stranded DNA binding protein, the primase, the helicase and the helicase assembly factor.

Its function is as follows. Forms the sliding-clamp-loader together with the small subunit. Functions as an ATPase enzyme. The clamp loader holds the clamp in an open conformation and places it onto the DNA. 4 ATP molecules must bind to the sliding-clamp-loader before the latter can open the sliding clamp. ATP hydrolysis triggers the detachment of the sliding clamp from the sliding-clamp-loader, freeing the sliding clamp to track along DNA. This is Sliding-clamp-loader large subunit (44) from Escherichia phage RB69 (Bacteriophage RB69).